The following is a 248-amino-acid chain: MIHKKISIMETNINLKVDDDKYINLAKNTILRERANIQNYILDYPEFLTSYTPIKVSPDAPAIVKTMAKAGEIAAVGPMASVAGTISEFIVKNAVEYGCKNIISENGGDIALKTEKSVVVGLYAGSSPLSYTIGFKINEDKANNGYGVCTSSGTVGHSVSFGNADAIVVFAKKASIADASATSIGNFAVGAPDDAINKCLEKAEDIEYIDGVFVVMGEFAGKMGKIPQMVKTDEKIVKTSMGEYFDMI.

Belongs to the UPF0280 family.

The polypeptide is UPF0280 protein Maeo_0343 (Methanococcus aeolicus (strain ATCC BAA-1280 / DSM 17508 / OCM 812 / Nankai-3)).